The following is a 409-amino-acid chain: LL-diaminopimelate aminotransferase (409 aa).

Residues tyrosine 15 and glycine 42 each coordinate substrate. Pyridoxal 5'-phosphate is bound by residues tyrosine 72, 108–109, tyrosine 132, asparagine 186, tyrosine 217, and 245–247; these read AK and SFS. Substrate is bound by residues lysine 109, tyrosine 132, and asparagine 186. At lysine 248 the chain carries N6-(pyridoxal phosphate)lysine. Pyridoxal 5'-phosphate contacts are provided by arginine 256 and asparagine 291. Residues asparagine 291 and arginine 387 each coordinate substrate.

It belongs to the class-I pyridoxal-phosphate-dependent aminotransferase family. LL-diaminopimelate aminotransferase subfamily. Homodimer. The cofactor is pyridoxal 5'-phosphate.

The enzyme catalyses (2S,6S)-2,6-diaminopimelate + 2-oxoglutarate = (S)-2,3,4,5-tetrahydrodipicolinate + L-glutamate + H2O + H(+). The protein operates within amino-acid biosynthesis; L-lysine biosynthesis via DAP pathway; LL-2,6-diaminopimelate from (S)-tetrahydrodipicolinate (aminotransferase route): step 1/1. In terms of biological role, involved in the synthesis of meso-diaminopimelate (m-DAP or DL-DAP), required for both lysine and peptidoglycan biosynthesis. Catalyzes the direct conversion of tetrahydrodipicolinate to LL-diaminopimelate. The polypeptide is LL-diaminopimelate aminotransferase (Phocaeicola vulgatus (strain ATCC 8482 / DSM 1447 / JCM 5826 / CCUG 4940 / NBRC 14291 / NCTC 11154) (Bacteroides vulgatus)).